The primary structure comprises 66 residues: Large ribosomal subunit protein uL29 (66 aa).

This sequence belongs to the universal ribosomal protein uL29 family.

This is Large ribosomal subunit protein uL29 from Deinococcus deserti (strain DSM 17065 / CIP 109153 / LMG 22923 / VCD115).